The following is a 190-amino-acid chain: Lipid A acyltransferase PagP (190 aa).

The signal sequence occupies residues 1-18; sequence MKRLISCLTIICALNASA. Residues His60, Asp103, and Ser104 contribute to the active site.

Belongs to the lipid A palmitoyltransferase family. In terms of assembly, homodimer.

Its subcellular location is the cell outer membrane. It catalyses the reaction a lipid A + a 1,2-diacyl-sn-glycero-3-phosphocholine = a hepta-acyl lipid A + a 2-acyl-sn-glycero-3-phosphocholine. It carries out the reaction a lipid IVA + a 1,2-diacyl-sn-glycero-3-phosphocholine = a lipid IVB + a 2-acyl-sn-glycero-3-phosphocholine. The catalysed reaction is a lipid IIA + a 1,2-diacyl-sn-glycero-3-phosphocholine = a lipid IIB + a 2-acyl-sn-glycero-3-phosphocholine. In terms of biological role, transfers a fatty acid residue from the sn-1 position of a phospholipid to the N-linked hydroxyfatty acid chain on the proximal unit of lipid A or its precursors. This chain is Lipid A acyltransferase PagP, found in Legionella pneumophila (strain Corby).